A 435-amino-acid chain; its full sequence is Trigger factor (435 aa).

A PPIase FKBP-type domain is found at 162–247; the sequence is GDRINIDYRG…LSGVESSKLP (86 aa).

The protein belongs to the FKBP-type PPIase family. Tig subfamily.

It localises to the cytoplasm. The enzyme catalyses [protein]-peptidylproline (omega=180) = [protein]-peptidylproline (omega=0). Functionally, involved in protein export. Acts as a chaperone by maintaining the newly synthesized protein in an open conformation. Functions as a peptidyl-prolyl cis-trans isomerase. This Nitrosospira multiformis (strain ATCC 25196 / NCIMB 11849 / C 71) protein is Trigger factor.